The sequence spans 307 residues: Ornithine carbamoyltransferase (307 aa).

Carbamoyl phosphate contacts are provided by residues 50 to 53, Gln-77, Arg-101, and 128 to 131; these read STRT and HPCQ. L-ornithine contacts are provided by residues Asn-160, Asp-224, and 228–229; that span reads SM. Residues 264-265 and Arg-292 contribute to the carbamoyl phosphate site; that span reads CL.

This sequence belongs to the aspartate/ornithine carbamoyltransferase superfamily. OTCase family.

The protein resides in the cytoplasm. It carries out the reaction carbamoyl phosphate + L-ornithine = L-citrulline + phosphate + H(+). Its pathway is amino-acid biosynthesis; L-arginine biosynthesis; L-arginine from L-ornithine and carbamoyl phosphate: step 1/3. Its function is as follows. Reversibly catalyzes the transfer of the carbamoyl group from carbamoyl phosphate (CP) to the N(epsilon) atom of ornithine (ORN) to produce L-citrulline. This chain is Ornithine carbamoyltransferase, found in Clavibacter sepedonicus (Clavibacter michiganensis subsp. sepedonicus).